The sequence spans 136 residues: Large ribosomal subunit protein bL17 (136 aa).

The protein belongs to the bacterial ribosomal protein bL17 family. Part of the 50S ribosomal subunit. Contacts protein L32.

This is Large ribosomal subunit protein bL17 from Rickettsia peacockii (strain Rustic).